Here is a 102-residue protein sequence, read N- to C-terminus: Small ribosomal subunit protein uS10 (102 aa).

This sequence belongs to the universal ribosomal protein uS10 family. Part of the 30S ribosomal subunit.

In terms of biological role, involved in the binding of tRNA to the ribosomes. The protein is Small ribosomal subunit protein uS10 of Pediococcus pentosaceus (strain ATCC 25745 / CCUG 21536 / LMG 10740 / 183-1w).